Here is a 132-residue protein sequence, read N- to C-terminus: Putative esterase Ta0293 (132 aa).

It belongs to the thioesterase PaaI family.

In Thermoplasma acidophilum (strain ATCC 25905 / DSM 1728 / JCM 9062 / NBRC 15155 / AMRC-C165), this protein is Putative esterase Ta0293.